The sequence spans 247 residues: Ribonuclease 3 (247 aa).

In terms of domain architecture, RNase III spans 23–149 (HADLLERLGV…LLGAIFRQHG (127 aa)). Glutamate 62 lines the Mg(2+) pocket. Aspartate 66 is an active-site residue. The Mg(2+) site is built by aspartate 135 and glutamate 138. Glutamate 138 is a catalytic residue. The DRBM domain occupies 176–244 (DWKTTLQEEL…ARQAFLKLRE (69 aa)).

The protein belongs to the ribonuclease III family. Homodimer. It depends on Mg(2+) as a cofactor.

It is found in the cytoplasm. It catalyses the reaction Endonucleolytic cleavage to 5'-phosphomonoester.. In terms of biological role, digests double-stranded RNA. Involved in the processing of primary rRNA transcript to yield the immediate precursors to the large and small rRNAs (23S and 16S). Processes some mRNAs, and tRNAs when they are encoded in the rRNA operon. Processes pre-crRNA and tracrRNA of type II CRISPR loci if present in the organism. The chain is Ribonuclease 3 from Corynebacterium efficiens (strain DSM 44549 / YS-314 / AJ 12310 / JCM 11189 / NBRC 100395).